Here is a 592-residue protein sequence, read N- to C-terminus: Frizzled-9 (592 aa).

A signal peptide spans 1 to 23; it reads MAVPPLLRGALLLWQLLATGGAA. At 24–230 the chain is on the extracellular side; it reads LEIGRFDPER…EVFWSRRDKD (207 aa). Residues 35 to 156 form the FZ domain; sequence RGPAPCQAME…NDPHALCMEA (122 aa). Cystine bridges form between C40–C101, C48–C94, C85–C123, C112–C153, and C116–C140. A required for Wnt-activated receptor activity region spans residues 59-173; it reads PNLLGHTSQG…PTEPHKGLGM (115 aa). The chain crosses the membrane as a helical span at residues 231–251; the sequence is FALVWMAVWSALCFFSTAFTV. The Cytoplasmic segment spans residues 252–267; the sequence is FTFLLEPHRFQYPERP. A helical membrane pass occupies residues 268 to 288; the sequence is IIFLSMCYNVYSLAFLIRAVA. At 289–314 the chain is on the extracellular side; the sequence is GAQSVACDQEAGALYVIQEGLENTGC. A helical transmembrane segment spans residues 315-335; the sequence is TLVFLLLYYFGMASSLWWVVL. Topologically, residues 336–356 are cytoplasmic; sequence TLTWFLAAGKKWGHEAIEAHG. A helical membrane pass occupies residues 357–377; it reads SYFHMAAWGLPALKTIVVLTL. The Extracellular portion of the chain corresponds to 378 to 401; the sequence is RKVAGDELTGLCYVASMDPAALTG. Residues 402 to 422 traverse the membrane as a helical segment; it reads FVLVPLSCYLVLGTSFLLTGF. The Cytoplasmic segment spans residues 423 to 448; that stretch reads VALFHIRKIMKTGGTNTEKLEKLMVK. A helical membrane pass occupies residues 449–469; sequence IGVFSILYTVPATCVIVCYVY. The Extracellular portion of the chain corresponds to 470-509; the sequence is ERLNMDFWRLRATEQPCTAAAVPGGRRDCSLPGGSVPTVA. The helical transmembrane segment at 510–530 threads the bilayer; the sequence is VFMLKIFMSLVVGITSGVWVW. Residues 531–592 lie on the Cytoplasmic side of the membrane; that stretch reads SSKTFQTWQS…DPSLENPTHL (62 aa). Residues 533 to 538 carry the Lys-Thr-X-X-X-Trp motif, mediates interaction with the PDZ domain of Dvl family members motif; that stretch reads KTFQTW. Positions 555-592 are required for CTNNB1 accumulation and TCF transcription factor activity; it reads ACRTPGGYGRGTHCHYKAPTVVLHMTKTDPSLENPTHL.

It belongs to the G-protein coupled receptor Fz/Smo family. Post-translationally, ubiquitinated by ZNRF3, leading to its degradation by the proteasome.

The protein resides in the cell membrane. Functionally, receptor for WNT2 that is coupled to the beta-catenin canonical signaling pathway, which leads to the activation of disheveled proteins, inhibition of GSK-3 kinase, nuclear accumulation of beta-catenin and activation of Wnt target genes. Plays a role in neuromuscular junction (NMJ) assembly by negatively regulating the clustering of acetylcholine receptors (AChR) through the beta-catenin canonical signaling pathway. May play a role in neural progenitor cells (NPCs) viability through the beta-catenin canonical signaling pathway by negatively regulating cell cycle arrest leading to inhibition of neuron apoptotic process. During hippocampal development, regulates neuroblast proliferation and apoptotic cell death. Controls bone formation through non canonical Wnt signaling mediated via ISG15. Positively regulates bone regeneration through non canonical Wnt signaling. This Rattus norvegicus (Rat) protein is Frizzled-9.